A 183-amino-acid polypeptide reads, in one-letter code: Beta-defensin 129 (183 aa).

A signal peptide spans 1-19; sequence MKLLFPVFASLMLQYQVNT. 3 disulfides stabilise this stretch: Cys-27/Cys-53, Cys-34/Cys-48, and Cys-38/Cys-54. A disordered region spans residues 141–183; that stretch reads TATSTKSNTKESRDSATASPPPAPPPPNILPTPSLELEKAEEQ. Over residues 159–170 the composition is skewed to pro residues; the sequence is SPPPAPPPPNIL.

The protein belongs to the beta-defensin family.

Its subcellular location is the secreted. Its function is as follows. Has antibacterial activity. This is Beta-defensin 129 (DEFB129) from Pongo pygmaeus (Bornean orangutan).